The chain runs to 143 residues: Large ribosomal subunit protein uL16 (143 aa).

Positions 1–17 (MLQPKRTKFRKAHKGRI) are enriched in basic residues. The disordered stretch occupies residues 1 to 20 (MLQPKRTKFRKAHKGRIHGN).

The protein belongs to the universal ribosomal protein uL16 family. As to quaternary structure, part of the 50S ribosomal subunit.

Binds 23S rRNA and is also seen to make contacts with the A and possibly P site tRNAs. The sequence is that of Large ribosomal subunit protein uL16 from Zymomonas mobilis subsp. mobilis (strain ATCC 31821 / ZM4 / CP4).